Consider the following 284-residue polypeptide: NAD kinase (284 aa).

The Proton acceptor role is filled by Asp-60. NAD(+)-binding positions include 60 to 61 (DG), 134 to 135 (ND), Arg-145, Lys-162, Asp-164, 175 to 180 (TAYSFS), and Gln-234.

This sequence belongs to the NAD kinase family. The cofactor is a divalent metal cation.

The protein resides in the cytoplasm. It carries out the reaction NAD(+) + ATP = ADP + NADP(+) + H(+). Its function is as follows. Involved in the regulation of the intracellular balance of NAD and NADP, and is a key enzyme in the biosynthesis of NADP. Catalyzes specifically the phosphorylation on 2'-hydroxyl of the adenosine moiety of NAD to yield NADP. The protein is NAD kinase of Clostridium beijerinckii (strain ATCC 51743 / NCIMB 8052) (Clostridium acetobutylicum).